The following is a 499-amino-acid chain: T-cell activation inhibitor, mitochondrial (499 aa).

Positions 206–233 form a coiled coil; sequence LRNSLPLRKELDRLKNELSELLQLSDIR.

Expressed in peripheral blood leukocytes, mainly in T-lymphocytes.

The protein localises to the mitochondrion. May regulate T-cell apoptosis. This Mus musculus (Mouse) protein is T-cell activation inhibitor, mitochondrial (TCAIM).